A 403-amino-acid polypeptide reads, in one-letter code: S-adenosylmethionine synthase (403 aa).

His16 is an ATP binding site. Asp18 is a binding site for Mg(2+). Glu44 lines the K(+) pocket. L-methionine is bound by residues Glu57 and Gln110. Residues 110 to 120 (QSAHIAQGVDA) form a flexible loop region. ATP contacts are provided by residues 175–177 (DSK), Asp253, 259–260 (RK), Ala276, and Lys280. Asp253 serves as a coordination point for L-methionine. Residue Lys284 coordinates L-methionine.

This sequence belongs to the AdoMet synthase family. In terms of assembly, homotetramer; dimer of dimers. The cofactor is Mg(2+). It depends on K(+) as a cofactor.

The protein resides in the cytoplasm. The enzyme catalyses L-methionine + ATP + H2O = S-adenosyl-L-methionine + phosphate + diphosphate. Its pathway is amino-acid biosynthesis; S-adenosyl-L-methionine biosynthesis; S-adenosyl-L-methionine from L-methionine: step 1/1. Its function is as follows. Catalyzes the formation of S-adenosylmethionine (AdoMet) from methionine and ATP. The overall synthetic reaction is composed of two sequential steps, AdoMet formation and the subsequent tripolyphosphate hydrolysis which occurs prior to release of AdoMet from the enzyme. The polypeptide is S-adenosylmethionine synthase (Erythrobacter litoralis (strain HTCC2594)).